The primary structure comprises 37 residues: Esculentin-2A (37 aa).

Cysteine 31 and cysteine 37 are oxidised to a cystine.

It belongs to the frog skin active peptide (FSAP) family. Esculentin subfamily. Expressed by the skin glands.

It is found in the secreted. Functionally, shows antibacterial activity against representative Gram-negative and Gram-positive bacterial species, and hemolytic activity. This chain is Esculentin-2A, found in Pelophylax lessonae (Pool frog).